The following is a 312-amino-acid chain: Acetaldehyde dehydrogenase 2 (312 aa).

Position 11-14 (11-14 (SGNI)) interacts with NAD(+). Residue Cys129 is the Acyl-thioester intermediate of the active site. NAD(+)-binding positions include 160–168 (SAGPGTRAN) and Asn287.

It belongs to the acetaldehyde dehydrogenase family.

The enzyme catalyses acetaldehyde + NAD(+) + CoA = acetyl-CoA + NADH + H(+). In Novosphingobium aromaticivorans (strain ATCC 700278 / DSM 12444 / CCUG 56034 / CIP 105152 / NBRC 16084 / F199), this protein is Acetaldehyde dehydrogenase 2.